Reading from the N-terminus, the 895-residue chain is MEVQLGLGRVYPRPPSKTYRGAFQNLFQSVREVIQNPGPRHPEAASAAPPGASLQQQQQQQQQETSPRQQQQQQGEDGSPQAHRRGPTGYLVLDEEQQPSQPQSAPECHPERGCVPEPGAAVAAGKGLPQQLPAPPDEDDSAAPSTLSLLGPTFPGLSSCSADLKDILSEASTMQLLQQQQQEAVSEGSSSGRAREASGAPTSSKDNYLGGTSTISDSAKELCKAVSVSMGLGVEALEHLSPGEQLRGDCMYAPVLGVPPAVRPTPCAPLAECKGSLLDDSAGKSTEDTAEYSPFKGGYTKGLEGESLGCSGSAAAGSSGTLELPSTLSLYKSGALDEAAAYQSRDYYNFPLALAGPPPPPPPPHPHARIKLENPLDYGSAWAAAAAQCRYGELASLHGAGAAGPGSGSPSAAASSSWHTLFTAEEGQLYGPCGGGGGGGGGGGGGAGEAGAVAPYGYTRPPQGLAGQEGDFTAPDVWYPGGMVSRVPYPSPTCVKSEMGPWMDSYSGPYGDMRLETARDHVLPIDYYFPPQKTCLICGDEASGCHYGALTCGSCKVFFKRAAEGKQKYLCASRNDCTIDKFRRKNCPSCRLRKCYEAGMTLGARKLKKLGNLKLQEEGEASSTTSPTEETAQKLTVSHIEGYECQPIFLNVLEAIEPGVVCAGHDNNQPDSFAALLSSLNELGERQLVHVVKWAKALPGFRNLHVDDQMAVIQYSWMGLMVFAMGWRSFTNVNSRMLYFAPDLVFNEYRMHKSRMYSQCVRMRHLSQEFGWLQITPQEFLCMKALLLFSIIPVDGLKNQKFFDELRMNYIKELDRIIACKRKNPTSCSRRFYQLTKLLDSVQPIARELHQFTFDLLIKSHMVSVDFPEMMAEIISVQVPKILSGKVKPIYFHTQ.

The modulating stretch occupies residues 1–533 (MEVQLGLGRV…PIDYYFPPQK (533 aa)). Residues 1 to 562 (MEVQLGLGRV…GSCKVFFKRA (562 aa)) are interaction with ZNF318. 2 disordered regions span residues 33–155 (VIQN…PTFP) and 175–211 (QLLQ…YLGG). Low complexity-rich tracts occupy residues 44 to 81 (AASA…GSPQ) and 175 to 200 (QLLQ…ASGA). A Phosphoserine; by CDK9 modification is found at serine 66. Phosphoserine is present on serine 79. The span at 201–211 (PTSSKDNYLGG) shows a compositional bias: polar residues. The residue at position 208 (tyrosine 208) is a Phosphotyrosine; by CSK. Phosphoserine is present on serine 241. A Phosphotyrosine; by CSK and TNK2 modification is found at tyrosine 252. Phosphotyrosine; by CSK occurs at positions 292, 331, 342, and 347. Tyrosine 348 is modified (phosphotyrosine; by CSK and TNK2). Lysine 371 participates in a covalent cross-link: Glycyl lysine isopeptide (Lys-Gly) (interchain with G-Cter in SUMO). Tyrosine 378 bears the Phosphotyrosine; by CSK mark. Residue lysine 496 forms a Glycyl lysine isopeptide (Lys-Gly) (interchain with G-Cter in SUMO) linkage. Residues tyrosine 510 and tyrosine 527 each carry the phosphotyrosine; by CSK modification. The interaction with LPXN stretch occupies residues 527–894 (YYFPPQKTCL…GKVKPIYFHT (368 aa)). The segment at residues 534–607 (TCLICGDEAS…AGMTLGARKL (74 aa)) is a DNA-binding region (nuclear receptor). 2 consecutive NR C4-type zinc fingers follow at residues 535–555 (CLIC…CGSC) and 571–595 (CASR…LRKC). Residues 547–637 (YGALTCGSCK…TEETAQKLTV (91 aa)) form an interaction with HIPK3 region. An interaction with CCAR1 region spans residues 567 to 894 (QKYLCASRND…GKVKPIYFHT (328 aa)). The interval 600-894 (MTLGARKLKK…GKVKPIYFHT (295 aa)) is interaction with KAT7. Serine 626 carries the post-translational modification Phosphoserine; by STK4/MST1. One can recognise an NR LBD domain in the interval 644–875 (ECQPIFLNVL…DFPEMMAEII (232 aa)). 17beta-hydroxy-5alpha-androstan-3-one-binding residues include asparagine 681 and arginine 728. Glycyl lysine isopeptide (Lys-Gly) (interchain with G-Cter in ubiquitin) cross-links involve residues lysine 821 and lysine 823. Position 853 (threonine 853) interacts with 17beta-hydroxy-5alpha-androstan-3-one. Tyrosine 891 carries the post-translational modification Phosphotyrosine; by CSK.

The protein belongs to the nuclear hormone receptor family. NR3 subfamily. Binds DNA as a homodimer. Part of a ternary complex containing AR, EFCAB6/DJBP and PARK7. Interacts with HIPK3 and NR0B2 in the presence of androgen. The ligand binding domain interacts with KAT7/HBO1 in the presence of dihydrotestosterone. Interacts with EFCAB6/DJBP, PQBP1, RANBP9, RBAK, SPDEF, SRA1, TGFB1I1 and RREB1. Interacts with ZMIZ1/ZIMP10 and ZMIZ2/ZMIP7 which both enhance its transactivation activity. Interacts with SLC30A9 and RAD54L2/ARIP4. Interacts with MACROD1 (via macro domain). Interacts via the ligand-binding domain with LXXLL and FXXLF motifs from NCOA1, NCOA2, NCOA3 and MAGEA11. Interacts (via nuclear receptor DNA binding domain and nuclear receptor ligand binding domain) with NCOA4. The AR N-terminal poly-Gln region binds Ran resulting in enhancement of AR-mediated transactivation. Ran-binding decreases as the poly-Gln length increases. Interacts with HIP1 (via coiled coil domain). Interacts (via ligand-binding domain) with TRIM68. Interacts with TNK2. Interacts with USP26. Interacts with RNF6. Interacts (regulated by RNF6 probably through polyubiquitination) with RNF14; regulates AR transcriptional activity. Interacts with PRMT2 and TRIM24. Interacts with RACK1. Interacts with RANBP10; this interaction enhances dihydrotestosterone-induced AR transcriptional activity. Interacts with PRPF6 in a hormone-independent way; this interaction enhances dihydrotestosterone-induced AR transcriptional activity. Interacts with STK4/MST1. Interacts with ZIPK/DAPK3. Interacts with LPXN. Interacts with MAK. Part of a complex containing AR, MAK and NCOA3. Interacts with CRY1. Interacts with CCAR1 and GATA2. Interacts with ZNF318. Interacts with BUD31. Interacts with ARID4A. Interacts with ARID4B. Interacts (via NR LBD domain) with ZBTB7A; the interaction is direct and androgen-dependent. Interacts with NCOR1. Interacts with NCOR2. Interacts with CRY2 in a ligand-dependent manner. In terms of processing, phosphorylated in prostate cancer cells in response to several growth factors including EGF. Phosphorylation is induced by c-Src kinase (CSK). Tyr-510 is one of the major phosphorylation sites and an increase in phosphorylation and Src kinase activity is associated with prostate cancer progression. Phosphorylation by TNK2 enhances the DNA-binding and transcriptional activity. Phosphorylation at Ser-66 by CDK9 regulates AR promoter selectivity and cell growth. Post-translationally, sumoylated on Lys-371 (major) and Lys-496. Ubiquitinated. Deubiquitinated by USP26. 'Lys-6' and 'Lys-27'-linked polyubiquitination by RNF6 modulates AR transcriptional activity and specificity. Palmitoylated by ZDHHC7 and ZDHHC21. Palmitoylation is required for plasma membrane targeting and for rapid intracellular signaling via ERK and AKT kinases and cAMP generation.

Its subcellular location is the nucleus. It localises to the cytoplasm. Its function is as follows. Steroid hormone receptors are ligand-activated transcription factors that regulate eukaryotic gene expression and affect cellular proliferation and differentiation in target tissues. Transcription factor activity is modulated by bound coactivator and corepressor proteins like ZBTB7A that recruits NCOR1 and NCOR2 to the androgen response elements/ARE on target genes, negatively regulating androgen receptor signaling and androgen-induced cell proliferation. Transcription activation is also down-regulated by NR0B2. Activated, but not phosphorylated, by HIPK3 and ZIPK/DAPK3. The chain is Androgen receptor (AR) from Papio hamadryas (Hamadryas baboon).